The sequence spans 80 residues: Raniseptin-1 (80 aa).

Positions Met-1–Cys-22 are cleaved as a signal peptide. Residues Glu-23–Glu-49 constitute a propeptide that is removed on maturation.

This sequence belongs to the frog skin active peptide (FSAP) family. Dermaseptin subfamily. As to expression, expressed by the skin glands.

The protein resides in the secreted. Functionally, has antibacterial activity against the Gram-negative bacteria E.coli ATCC 25922 (MIC=5 uM), P.aeruginosa ATCC 27853 (MIC=10 uM) and X.citri (MIC&lt; 2 uM), and the Gram-positive bacterium S.aureus ATCC 29313 (MIC=20 uM). Does not have hemolytic activity against human erythrocytes. This chain is Raniseptin-1, found in Boana raniceps (Chaco tree frog).